A 396-amino-acid chain; its full sequence is Elongation factor Tu (396 aa).

Residues 10 to 207 (KPHCNIGTIG…VDAYIPQPPR (198 aa)) form the tr-type G domain. Positions 19 to 26 (GHVDHGKT) are G1. GTP is bound at residue 19-26 (GHVDHGKT). Mg(2+) is bound at residue threonine 26. The tract at residues 60–64 (GITIS) is G2. The tract at residues 81-84 (DCPG) is G3. GTP-binding positions include 81–85 (DCPGH) and 136–139 (NKVD). A G4 region spans residues 136-139 (NKVD). Residues 174 to 176 (SAL) are G5.

Belongs to the TRAFAC class translation factor GTPase superfamily. Classic translation factor GTPase family. EF-Tu/EF-1A subfamily. In terms of assembly, monomer.

It is found in the cytoplasm. The enzyme catalyses GTP + H2O = GDP + phosphate + H(+). Its function is as follows. GTP hydrolase that promotes the GTP-dependent binding of aminoacyl-tRNA to the A-site of ribosomes during protein biosynthesis. In Novosphingobium aromaticivorans (strain ATCC 700278 / DSM 12444 / CCUG 56034 / CIP 105152 / NBRC 16084 / F199), this protein is Elongation factor Tu.